A 139-amino-acid polypeptide reads, in one-letter code: Small ribosomal subunit protein eS12 (139 aa).

This sequence belongs to the eukaryotic ribosomal protein eS12 family. Subunit of the 40S ribosomal complex. Part of the small subunit (SSU) processome, composed of more than 70 proteins and the RNA chaperone small nucleolar RNA (snoRNA) U3.

It localises to the nucleus. The protein localises to the nucleolus. Subunit of the 40S ribosomal complex. Part of the small subunit (SSU) processome, first precursor of the small eukaryotic ribosomal subunit. During the assembly of the SSU processome in the nucleolus, many ribosome biogenesis factors, an RNA chaperone and ribosomal proteins associate with the nascent pre-rRNA and work in concert to generate RNA folding, modifications, rearrangements and cleavage as well as targeted degradation of pre-ribosomal RNA by the RNA exosome. In wing imaginal disks, might have a role in translation rate, growth and cell competition, probably through regulation of Xrp1 expression. Might have a role in development and longevity. This chain is Small ribosomal subunit protein eS12, found in Drosophila melanogaster (Fruit fly).